The chain runs to 497 residues: Putative diacyglycerol O-acyltransferase Rv3480c (497 aa).

Residue histidine 143 is the Proton acceptor of the active site.

It belongs to the long-chain O-acyltransferase family.

It carries out the reaction an acyl-CoA + a 1,2-diacyl-sn-glycerol = a triacyl-sn-glycerol + CoA. The enzyme catalyses di-(9Z)-octadecenoylglycerol + (9Z)-octadecenoyl-CoA = 1,2,3-tri-(9Z-octadecenoyl)-glycerol + CoA. It catalyses the reaction hexadecan-1-ol + hexadecanoyl-CoA = hexadecanyl hexadecanoate + CoA. The protein operates within glycerolipid metabolism; triacylglycerol biosynthesis. In terms of biological role, upon expression in E.coli has a weak triacylglycerol synthase function, making triacylglycerol (TG) from diolein and long-chain fatty acyl-CoA. Also functions weakly as a wax synthase, as it incorporates palmityl alcohol into wax esters in the presence of palmitoyl-CoA. The polypeptide is Putative diacyglycerol O-acyltransferase Rv3480c (Mycobacterium tuberculosis (strain ATCC 25618 / H37Rv)).